We begin with the raw amino-acid sequence, 471 residues long: Glutamate--tRNA ligase (471 aa).

Positions 9–19 (PSPTGYLHVGG) match the 'HIGH' region motif. Zn(2+) contacts are provided by Cys98, Cys100, Cys125, and His127. A 'KMSKS' region motif is present at residues 237–241 (KLSKR). An ATP-binding site is contributed by Lys240.

The protein belongs to the class-I aminoacyl-tRNA synthetase family. Glutamate--tRNA ligase type 1 subfamily. In terms of assembly, monomer. Requires Zn(2+) as cofactor.

The protein localises to the cytoplasm. The enzyme catalyses tRNA(Glu) + L-glutamate + ATP = L-glutamyl-tRNA(Glu) + AMP + diphosphate. In terms of biological role, catalyzes the attachment of glutamate to tRNA(Glu) in a two-step reaction: glutamate is first activated by ATP to form Glu-AMP and then transferred to the acceptor end of tRNA(Glu). The sequence is that of Glutamate--tRNA ligase from Salmonella enteritidis PT4 (strain P125109).